The chain runs to 460 residues: Flavonol 3-O-glucosyltransferase (460 aa).

The Proton acceptor role is filled by histidine 23. An anthocyanidin-binding residues include histidine 23 and glutamine 88. Aspartate 123 functions as the Charge relay in the catalytic mechanism. Threonine 145 contributes to the UDP-alpha-D-glucose binding site. An anthocyanidin is bound at residue histidine 154. Positions 339, 341, 356, 359, 360, 361, and 364 each coordinate UDP-alpha-D-glucose. Glycine 379 contacts an anthocyanidin. Residues aspartate 380 and glutamine 381 each coordinate UDP-alpha-D-glucose.

It belongs to the UDP-glycosyltransferase family.

The catalysed reaction is a flavonol + UDP-alpha-D-glucose = a flavonol 3-O-beta-D-glucoside + UDP + H(+). It catalyses the reaction quercetin + UDP-alpha-D-glucose = quercetin 3-O-beta-D-glucoside + UDP + H(+). The protein operates within flavonoid metabolism. Its function is as follows. Flavonol 3-O-glucosyltransferase that catalyzes the transfer of glucose from UDP-glucose to the 3-OH position of quercetin and kaempferol. Possesses high quercetin 3-O-glucosyltransferase activity in vitro. Catalyzes the glycosylation of anthocyanins from UDP-glucose. Also active in vitro on benzoates and benzoate derivatives. This Arabidopsis thaliana (Mouse-ear cress) protein is Flavonol 3-O-glucosyltransferase.